A 583-amino-acid chain; its full sequence is MASISLFPYSILKQTSPLARGTAYNRIYSTKTTGITVDVAESHVRRSANYEPSSWSFDHIQSLSSKYTGDDCVARANTLKESVKTMIRKEGNLLRTLELVDELQRLGISYLFEGEISNLLETIYYNHYKFPEKWNKFDLNLKALGFRLLRQHGYHVPQEIFLNFKDKNQNLNSYLLEDVVGMLNLYEASYHSFEDESILTEARDIATKYLKASLEKIDGSILSLVSHALDNRLHWRVPRVESKWFIEVYEKRVGASPTLIELAKLDFDMVQAIHLEDLKHASRWWRNTSWDTKLTFARDMLVENFLWTVGFSYLPNFSHGRRTITKVAAMITTLDDVYDVFGTLGELEQFTDVINRWDIKAIEQLPDYMKICFFGLYNSINDITYETLATKGFLILPYIKKAWADLCKSYLVEAQWYHRGHIPTLNEYLDNACVSISGPVALMHVHFLTSVSSTKEIHHCIERTQNIVRYVSLIFRLTDDLGTSLGEMERGDTLKSIQLYMHETGATEPEARSYIKSLIDKTWKKLNKERAIVSSESSREFIDYATNLARMAHFMYGEGDEDFRLDVIKSHVSSLLFTPIQGI.

Residues Met-1–Ala-40 constitute a chloroplast transit peptide. Positions 298, 335, 339, 476, and 479 each coordinate (2E)-geranyl diphosphate. 2 residues coordinate Mg(2+): Asp-335 and Asp-339. Residues Asp-335–Asp-339 carry the DDXXD motif motif. Mg(2+)-binding residues include Asp-479, Thr-483, and Glu-487. K(+) is bound at residue Asp-492.

Belongs to the terpene synthase family. Tpsb subfamily. The cofactor is Mg(2+). It depends on Mn(2+) as a cofactor. K(+) serves as cofactor. As to expression, expressed in every aerial organ except for the stem stele of mature plants. Not detected in roots.

It localises to the plastid. The protein localises to the chloroplast. It carries out the reaction (2E)-geranyl diphosphate + H2O = (R)-linalool + diphosphate. The protein operates within secondary metabolite biosynthesis; terpenoid biosynthesis. Its function is as follows. Monoterpene synthase that catalyzes the formation of (3R)-linalool from geranyl diphosphate, but not from isopentenyl diphosphate, dimethylallyl diphosphate, chrysanthemyl diphosphate, farnesyl diphosphate, (+)-copalyl diphosphate or geranylgeranyl diphosphate. The polypeptide is R-linalool synthase QH5, chloroplastic (Artemisia annua (Sweet wormwood)).